The sequence spans 48 residues: Delta-stichotoxin-She1a (48 aa).

3 disulfides stabilise this stretch: C3–C43, C5–C33, and C26–C44.

This sequence belongs to the sea anemone sodium channel inhibitory toxin family. Type II subfamily.

Its subcellular location is the secreted. It is found in the nematocyst. Functionally, binds specifically to voltage-gated sodium channels (Nav), thereby delaying their inactivation during signal transduction. Is highly toxic to crabs (by intrahemocoelic injection), but without effect upon mice (by intraperitoneal injection). The protein is Delta-stichotoxin-She1a of Stichodactyla helianthus (Sun anemone).